Reading from the N-terminus, the 162-residue chain is Ribosomal RNA large subunit methyltransferase H (162 aa).

S-adenosyl-L-methionine contacts are provided by residues leucine 78, glycine 109, and 128–133 (LSALTL).

This sequence belongs to the RNA methyltransferase RlmH family. In terms of assembly, homodimer.

Its subcellular location is the cytoplasm. The enzyme catalyses pseudouridine(1915) in 23S rRNA + S-adenosyl-L-methionine = N(3)-methylpseudouridine(1915) in 23S rRNA + S-adenosyl-L-homocysteine + H(+). In terms of biological role, specifically methylates the pseudouridine at position 1915 (m3Psi1915) in 23S rRNA. This chain is Ribosomal RNA large subunit methyltransferase H, found in Psychrobacter cryohalolentis (strain ATCC BAA-1226 / DSM 17306 / VKM B-2378 / K5).